A 433-amino-acid chain; its full sequence is Enolase (433 aa).

Gln-167 is a (2R)-2-phosphoglycerate binding site. The active-site Proton donor is Glu-209. Asp-246, Glu-291, and Asp-318 together coordinate Mg(2+). Lys-343, Arg-372, Ser-373, and Lys-394 together coordinate (2R)-2-phosphoglycerate. The active-site Proton acceptor is the Lys-343.

The protein belongs to the enolase family. Component of the RNA degradosome, a multiprotein complex involved in RNA processing and mRNA degradation. Mg(2+) serves as cofactor.

The protein localises to the cytoplasm. It localises to the secreted. It is found in the cell surface. It carries out the reaction (2R)-2-phosphoglycerate = phosphoenolpyruvate + H2O. The protein operates within carbohydrate degradation; glycolysis; pyruvate from D-glyceraldehyde 3-phosphate: step 4/5. Catalyzes the reversible conversion of 2-phosphoglycerate (2-PG) into phosphoenolpyruvate (PEP). It is essential for the degradation of carbohydrates via glycolysis. In Sodalis glossinidius (strain morsitans), this protein is Enolase.